The primary structure comprises 297 residues: Carboxysome assembly protein CcmO (297 aa).

Residues 1-29 form a disordered region; that stretch reads MPTSPTMTSVPIARSPRPSYQQINQHQPS. Residues 18–29 are compositionally biased toward polar residues; sequence PSYQQINQHQPS. 2 consecutive BMC domains span residues 32–116 and 138–222; these read ALGL…AVFP and SIGL…HTLP.

It belongs to the bacterial microcompartments protein family. As to quaternary structure, homooligomerizes, possibly as a trimer, interacts with CcmK in the carboxysome.

Its subcellular location is the carboxysome. Its function is as follows. Required for formation of the carboxysome, a polyhedral inclusion where RuBisCO (ribulose bisphosphate carboxylase, rbcL-rbcS) is sequestered. Required for recruitment of major shell protein CcmK2 to the pre-carboxysome. Suggested to be a carboxysome shell protein. The protein is Carboxysome assembly protein CcmO of Synechocystis sp. (strain ATCC 27184 / PCC 6803 / Kazusa).